A 349-amino-acid polypeptide reads, in one-letter code: Septin-2 (349 aa).

Residues 33 to 305 (KGFEFTLMVV…ENFRSERLKR (273 aa)) form the Septin-type G domain. Residues 43–50 (GESGLGKS) are G1 motif. GTP contacts are provided by residues 43–50 (GESGLGKS), T77, G103, 182–190 (KADTLTLKE), G240, and R255. The segment at 100-103 (DTPG) is G3 motif. The G4 motif stretch occupies residues 181 to 184 (AKAD). Residues 259–269 (WGVVEVENPEH) are important for dimerization.

The protein belongs to the TRAFAC class TrmE-Era-EngA-EngB-Septin-like GTPase superfamily. Septin GTPase family. Septins polymerize into heterooligomeric protein complexes that form filaments, and associate with cellular membranes, actin filaments and microtubules. GTPase activity is required for filament formation. Can form heterooligomers with other family members and form filaments.

It localises to the cytoplasm. The protein resides in the cytoskeleton. The protein localises to the spindle. It is found in the cleavage furrow. Its subcellular location is the midbody. It localises to the cell cortex. The protein resides in the cell projection. The protein localises to the cilium membrane. In terms of biological role, filament-forming cytoskeletal GTPase. Required for normal organization of the actin cytoskeleton. Plays a role in the biogenesis of polarized columnar-shaped epithelium by maintaining polyglutamylated microtubules, thus facilitating efficient vesicle transport, and by impeding MAP4 binding to tubulin. Required for the progression through mitosis. Forms a scaffold at the midplane of the mitotic splindle required to maintain CENPE localization at kinetochores and consequently chromosome congression. During anaphase, may be required for chromosome segregation and spindle elongation. Plays a role in ciliogenesis and collective cell movements. In cilia, required for the integrity of the diffusion barrier at the base of the primary cilium that prevents diffusion of transmembrane proteins between the cilia and plasma membranes. The sequence is that of Septin-2 from Gallus gallus (Chicken).